A 108-amino-acid chain; its full sequence is NADH dehydrogenase [ubiquinone] 1 alpha subcomplex subunit 8-A (108 aa).

2 CHCH domains span residues 28-69 and 70-108; these read GIRC…LKDL and HQRC…CPLK. 3 consecutive short sequence motifs (cx9C motif) follow at residues 31–41, 51–61, and 73–83; these read CMPENMAFLKC, CLEKGRDVTRC, and CPKEMDAYVGC. 4 disulfides stabilise this stretch: Cys-31/Cys-61, Cys-41/Cys-51, Cys-73/Cys-105, and Cys-83/Cys-94. The Cx10C motif signature appears at 94–105; it reads CRKEQEAFEKVC.

This sequence belongs to the complex I NDUFA8 subunit family. In terms of assembly, complex I is composed of at least 49 different subunits.

Its subcellular location is the mitochondrion. The protein resides in the mitochondrion intermembrane space. Functionally, accessory subunit of the mitochondrial membrane respiratory chain NADH dehydrogenase (Complex I), that is believed not to be involved in catalysis. Complex I functions in the transfer of electrons from NADH to the respiratory chain. The immediate electron acceptor for the enzyme is believed to be ubiquinone. The sequence is that of NADH dehydrogenase [ubiquinone] 1 alpha subcomplex subunit 8-A from Arabidopsis thaliana (Mouse-ear cress).